The sequence spans 181 residues: Large ribosomal subunit protein uL5 (181 aa).

It belongs to the universal ribosomal protein uL5 family. Part of the 50S ribosomal subunit; contacts the 5S rRNA and probably tRNA. Forms a bridge to the 30S subunit in the 70S ribosome.

Functionally, this is one of the proteins that bind and probably mediate the attachment of the 5S RNA into the large ribosomal subunit, where it forms part of the central protuberance. In the 70S ribosome it contacts protein S13 of the 30S subunit (bridge B1b), connecting the 2 subunits; this bridge is implicated in subunit movement. May contact the P site tRNA; the 5S rRNA and some of its associated proteins might help stabilize positioning of ribosome-bound tRNAs. The protein is Large ribosomal subunit protein uL5 of Methanococcus maripaludis (strain C5 / ATCC BAA-1333).